We begin with the raw amino-acid sequence, 314 residues long: Acetaldehyde dehydrogenase (314 aa).

15–18 is an NAD(+) binding site; it reads SGNI. Catalysis depends on Cys133, which acts as the Acyl-thioester intermediate. NAD(+)-binding positions include 164 to 172 and Asn292; that span reads SAGPGTRAN.

It belongs to the acetaldehyde dehydrogenase family.

The catalysed reaction is acetaldehyde + NAD(+) + CoA = acetyl-CoA + NADH + H(+). This Paraburkholderia phytofirmans (strain DSM 17436 / LMG 22146 / PsJN) (Burkholderia phytofirmans) protein is Acetaldehyde dehydrogenase.